A 191-amino-acid polypeptide reads, in one-letter code: MPLVFVYGTLKKGQPNYFRLIDSSNGQAEFITCARTVEPYPLVITGECNIPFLLNVPGSGQRVYGEIYSVDQKMLEFLDWFEECPDWYQRTLIQLEILKGNGETEVEEAFVYTKTKYEPDWLNKPTYDSYDSNGDHGLKYAYEEDMTRSTLDQKSADFSQNSEQEIKKNNSLQILTSTGDDHDVNFRGPLQ.

Substrate is bound at residue 7 to 10 (YGTL). Glu-82 serves as the catalytic Proton acceptor. The segment covering 155 to 178 (SADFSQNSEQEIKKNNSLQILTST) has biased composition (polar residues). The segment at 155-191 (SADFSQNSEQEIKKNNSLQILTSTGDDHDVNFRGPLQ) is disordered.

Belongs to the gamma-glutamylcyclotransferase family.

It carries out the reaction epsilon-(gamma-L-glutamyl)-L-lysine = 5-oxo-L-proline + L-lysine. Its function is as follows. May contribute to degradation of proteins cross-linked by transglutaminases by degrading the cross-link between a lysine and a glutamic acid residue. Catalyzes the formation of 5-oxo-L-proline from L-gamma-glutamyl-L-epsilon-lysine. This chain is Gamma-glutamylaminecyclotransferase B (ggact.2), found in Danio rerio (Zebrafish).